The sequence spans 827 residues: Tuftelin-interacting protein 11 (827 aa).

Disordered stretches follow at residues 31–129 (FNPH…KGFV) and 179–203 (QRKG…DFPV). The span at 41-60 (TKEEATYGVWAERDSDEERP) shows a compositional bias: basic and acidic residues. The span at 88-98 (DVSDEDSDEDE) shows a compositional bias: acidic residues. Residues 99-112 (KPVKQEEIPKEFVP) show a composition bias toward basic and acidic residues. Positions 145-191 (TKGIGQKLLQKMGYVPGRGLGKNAQGIINPIEAKQRKGKGAVGAYGS) constitute a G-patch domain.

Belongs to the TFP11/STIP family. In terms of assembly, identified in the spliceosome C complex.

The protein localises to the nucleus. Involved in pre-mRNA splicing, specifically in spliceosome disassembly during late-stage splicing events. The sequence is that of Tuftelin-interacting protein 11 (TFIP11) from Gallus gallus (Chicken).